A 443-amino-acid chain; its full sequence is Regulator of rDNA transcription protein 5 (443 aa).

The region spanning 4–87 is the RRM 1 domain; the sequence is SRIYIANVSY…RVLRVRTHNP (84 aa). Residues 112 to 140 form a disordered region; it reads EDTAASGERAPTDAQDHPDQPQEGHMSPD. Residues 121–133 are compositionally biased toward basic and acidic residues; that stretch reads APTDAQDHPDQPQ. The region spanning 183 to 268 is the RRM 2 domain; it reads DTVYCAFLPK…TKISIKPAYI (86 aa). Residues 408-443 are disordered; it reads GMTKQSVGSNKKKNKKKKSARGKEVRKLSVSNTTTQ. The segment covering 417–427 has biased composition (basic residues); that stretch reads NKKKNKKKKSA.

The protein belongs to the RRT5 family.

Functionally, may be involved in the modulation of rDNA transcription. In Candida glabrata (strain ATCC 2001 / BCRC 20586 / JCM 3761 / NBRC 0622 / NRRL Y-65 / CBS 138) (Yeast), this protein is Regulator of rDNA transcription protein 5 (RRT5).